Reading from the N-terminus, the 225-residue chain is Transcription factor HES-7 (225 aa).

The 58-residue stretch at 12–69 (GPKMLKPLVEKRRRDRINRSLEELRLLLLERTRDQNLRNPKLEKAEILEFAVGYLRER) folds into the bHLH domain. The Orange domain occupies 92–122 (YLSGFRECLLRLAAFAHDASPAARAQLFSAL). The tract at residues 125 to 225 (YLRPKPPRPK…PPPAFWRPWP (101 aa)) is disordered. Over residues 147 to 158 (LDPAAPALGPAL) the composition is skewed to low complexity. Over residues 212–225 (APLPPPPAFWRPWP) the composition is skewed to pro residues. The WRPW motif signature appears at 221–224 (WRPW).

As to quaternary structure, transcription repression requires formation of a complex with a corepressor protein of the Groucho/TLE family.

It is found in the nucleus. Transcriptional repressor. Represses transcription from both N box- and E box-containing promoters. May with HES1, cooperatively regulate somite formation in the presomitic mesoderm (PSM). May function as a segmentation clock, which is essential for coordinated somite segmentation. This Homo sapiens (Human) protein is Transcription factor HES-7 (HES7).